The following is a 194-amino-acid chain: Fibroblast growth factor 7 (194 aa).

A signal peptide spans 1 to 31 (MHKWILTWILPTLLYRSCFHIICLVGTISLA). N-linked (GlcNAc...) asparagine glycosylation occurs at N45.

The protein belongs to the heparin-binding growth factors family. In terms of assembly, interacts with FGFBP1. Interacts with FGFR2. Affinity between fibroblast growth factors (FGFs) and their receptors is increased by heparan sulfate glycosaminoglycans that function as coreceptors. As to expression, epithelial cell.

Its subcellular location is the secreted. Functionally, plays an important role in the regulation of embryonic development, cell proliferation and cell differentiation. Required for normal branching morphogenesis. Growth factor active on keratinocytes. Possible major paracrine effector of normal epithelial cell proliferation. The sequence is that of Fibroblast growth factor 7 (FGF7) from Homo sapiens (Human).